The chain runs to 356 residues: Uroporphyrinogen decarboxylase (356 aa).

The coproporphyrinogen I site is built by arginine 33, alanine 35, arginine 37, arginine 46, aspartate 82, tyrosine 159, serine 214, and histidine 334. Coproporphyrinogen III contacts are provided by arginine 33, alanine 35, and arginine 37. Coproporphyrinogen III contacts are provided by aspartate 82, tyrosine 159, serine 214, and histidine 334.

It belongs to the uroporphyrinogen decarboxylase family. Homodimer.

The protein localises to the cytoplasm. The protein resides in the cytosol. It catalyses the reaction uroporphyrinogen III + 4 H(+) = coproporphyrinogen III + 4 CO2. Its pathway is porphyrin-containing compound metabolism; protoporphyrin-IX biosynthesis; coproporphyrinogen-III from 5-aminolevulinate: step 4/4. In terms of biological role, catalyzes the decarboxylation of four acetate groups of uroporphyrinogen-III to yield coproporphyrinogen-III. This is Uroporphyrinogen decarboxylase from Drosophila melanogaster (Fruit fly).